The following is a 313-amino-acid chain: Protein-methionine-sulfoxide reductase catalytic subunit MsrP (313 aa).

The tat-type signal signal peptide spans 1–44 (MARWRPDMAEREATPEALYLRRREFLALGAAGAVGLLVARGARA). Residues Asn-76, 79 to 80 (YE), Cys-134, Thr-169, Asn-217, Arg-222, and 233 to 235 (GAK) contribute to the Mo-molybdopterin site.

The protein belongs to the MsrP family. In terms of assembly, heterodimer of a catalytic subunit (MsrP) and a heme-binding subunit (MsrQ). Requires Mo-molybdopterin as cofactor. Predicted to be exported by the Tat system. The position of the signal peptide cleavage has not been experimentally proven.

The protein resides in the periplasm. The catalysed reaction is L-methionyl-[protein] + a quinone + H2O = L-methionyl-(S)-S-oxide-[protein] + a quinol. The enzyme catalyses L-methionyl-[protein] + a quinone + H2O = L-methionyl-(R)-S-oxide-[protein] + a quinol. In terms of biological role, part of the MsrPQ system that repairs oxidized periplasmic proteins containing methionine sulfoxide residues (Met-O), using respiratory chain electrons. Thus protects these proteins from oxidative-stress damage caused by reactive species of oxygen and chlorine generated by the host defense mechanisms. MsrPQ is essential for the maintenance of envelope integrity under bleach stress, rescuing a wide series of structurally unrelated periplasmic proteins from methionine oxidation. The catalytic subunit MsrP is non-stereospecific, being able to reduce both (R-) and (S-) diastereoisomers of methionine sulfoxide. The protein is Protein-methionine-sulfoxide reductase catalytic subunit MsrP of Anaeromyxobacter sp. (strain K).